Reading from the N-terminus, the 368-residue chain is Glutamate 5-kinase (368 aa).

Residue lysine 11 participates in ATP binding. Residues serine 51, aspartate 138, and asparagine 150 each contribute to the substrate site. Residues 170-171 and 212-218 contribute to the ATP site; these read TD and TGGMATK. A PUA domain is found at 276–354; that stretch reads AGEIIVDHGA…QQISQILGYE (79 aa).

This sequence belongs to the glutamate 5-kinase family.

The protein resides in the cytoplasm. It catalyses the reaction L-glutamate + ATP = L-glutamyl 5-phosphate + ADP. It functions in the pathway amino-acid biosynthesis; L-proline biosynthesis; L-glutamate 5-semialdehyde from L-glutamate: step 1/2. Catalyzes the transfer of a phosphate group to glutamate to form L-glutamate 5-phosphate. The polypeptide is Glutamate 5-kinase (Photorhabdus laumondii subsp. laumondii (strain DSM 15139 / CIP 105565 / TT01) (Photorhabdus luminescens subsp. laumondii)).